Reading from the N-terminus, the 446-residue chain is MSERKYFGTDGVRGRVGQFPITPEFAVKLGWAAGRVLAAKGTSRVLVGKDTRVSGYMLESALEAGLAAAGVGVDFLGPMPTPGIAYLTRTFRAAAGIVISASHNPYYDNGIKFFADNGHKLPDAVELEIERLLDEPMDCVISEELGRAKRINDAAGRYIEFCKSVFPNEMTLEGLHIVVDCAHGATYHIAPNVLRELGAEVTEIGTQPNGLNINKECGATHLTALQNKVLETKADLGIALDGDGDRIMMVTENGRPIDGDEILYMLAVTAQNQGQLQGGVVGTLMTNFALEKELDKRRIPFVRAKVGDRYVIEELVKRDWYLGGENSGHVINRQHHTTGDGIIAGLQVLAAMYQEQKSLEKLSCDFHKLPQVLINVRFESDKQPLESENVKSVVREVESALAGTGRVLLRKSGTEPLIRVMVEGENEAKVKAFAQQIANEVEAATN.

Ser102 serves as the catalytic Phosphoserine intermediate. 4 residues coordinate Mg(2+): Ser102, Asp241, Asp243, and Asp245. Position 102 is a phosphoserine (Ser102).

This sequence belongs to the phosphohexose mutase family. Mg(2+) is required as a cofactor. Post-translationally, activated by phosphorylation.

The catalysed reaction is alpha-D-glucosamine 1-phosphate = D-glucosamine 6-phosphate. In terms of biological role, catalyzes the conversion of glucosamine-6-phosphate to glucosamine-1-phosphate. The sequence is that of Phosphoglucosamine mutase from Idiomarina loihiensis (strain ATCC BAA-735 / DSM 15497 / L2-TR).